The chain runs to 193 residues: Cbp/p300-interacting transactivator 1 (193 aa).

3 disordered regions span residues 1 to 26 (MPTT…NQEM), 50 to 88 (VASN…LHPA), and 106 to 147 (GMAA…SPAI). Over residues 54–73 (GTKASGAPTSSSGSPIGSPT) the composition is skewed to low complexity. The Nuclear export signal motif lies at 158 to 167 (LMSLVVELGL).

This sequence belongs to the CITED family. Interacts (via C-terminus) with CREBBP. Interacts with EGR2. Homodimer. Binds to RBM14. Interacts (via N-terminus) with HSPA8; the interaction suppresses the association of CITED1 with p300/CBP and SMAD-mediated transcription transactivation. Interacts (via C-terminus) with TOX3 (via HGM box); the interaction increases estrogen-response element (ERE)-dependent transcription and protection against cell death. Interacts with ESR1; the interaction occurs in a estrogen-dependent manner. Interacts (unphosphorylated form preferentially and via C-terminus) with EP300. In terms of processing, phosphorylated. Phosphorylation changes in a cell cycle-dependent manner and reduces its transcriptional coactivator activity. Expressed only in melanocytes and testis.

Its subcellular location is the nucleus. The protein resides in the cytoplasm. In terms of biological role, transcriptional coactivator of the p300/CBP-mediated transcription complex. Enhances SMAD-mediated transcription by strengthening the functional link between the DNA-binding SMAD transcription factors and the p300/CBP transcription coactivator complex. Stimulates estrogen-dependent transactivation activity mediated by estrogen receptors signaling; stabilizes the interaction of estrogen receptor ESR1 and histone acetyltransferase EP300. Positively regulates TGF-beta signaling through its association with the SMAD/p300/CBP-mediated transcriptional coactivator complex. Induces transcription from estrogen-responsive promoters and protection against cell death. Potentiates EGR2-mediated transcriptional activation activity from the ERBB2 promoter. Acts as an inhibitor of osteoblastic mineralization through a cAMP-dependent parathyroid hormone receptor signaling. May play a role in pigmentation of melanocytes. Associates with chromatin to the estrogen-responsive TGF-alpha promoter region in a estrogen-dependent manner. The polypeptide is Cbp/p300-interacting transactivator 1 (CITED1) (Homo sapiens (Human)).